A 367-amino-acid polypeptide reads, in one-letter code: Peptide chain release factor 2 (367 aa).

An N5-methylglutamine modification is found at Q254.

The protein belongs to the prokaryotic/mitochondrial release factor family. Post-translationally, methylated by PrmC. Methylation increases the termination efficiency of RF2.

Its subcellular location is the cytoplasm. In terms of biological role, peptide chain release factor 2 directs the termination of translation in response to the peptide chain termination codons UGA and UAA. The sequence is that of Peptide chain release factor 2 from Aromatoleum aromaticum (strain DSM 19018 / LMG 30748 / EbN1) (Azoarcus sp. (strain EbN1)).